We begin with the raw amino-acid sequence, 201 residues long: dTTP/UTP pyrophosphatase (201 aa).

Residue Asp-76 is the Proton acceptor of the active site.

The protein belongs to the Maf family. YhdE subfamily. A divalent metal cation serves as cofactor.

It localises to the cytoplasm. It catalyses the reaction dTTP + H2O = dTMP + diphosphate + H(+). The enzyme catalyses UTP + H2O = UMP + diphosphate + H(+). Its function is as follows. Nucleoside triphosphate pyrophosphatase that hydrolyzes dTTP and UTP. May have a dual role in cell division arrest and in preventing the incorporation of modified nucleotides into cellular nucleic acids. This chain is dTTP/UTP pyrophosphatase, found in Neisseria meningitidis serogroup A / serotype 4A (strain DSM 15465 / Z2491).